Here is a 498-residue protein sequence, read N- to C-terminus: MGNCCGSKPLTASDIVSDQKQETILGKPLEDIKKHYSFGDELGKGNFGTTYLCKENSTGKSYACKSIPKRTLSSEEEKEAVKTEIQIMDHVSGQPNIVQIKGSYEDNNSIHIVMELCGGGELFDKIDALVKSHSYYSEKDAAGIFRSIVNAVKICHSLDVVHRDLKPENFLFSSKDENAMLKAIDFGCSVYIKEGKTFERVVGSKYYIAPEVLEGSYGKEIDIWSAGVILYILLSGVPPFQTGIESIIVSTLCIVDAEIKECRLDFESQPWPLISFKAKHLIGKMLTKKPKERISAADVLEHPWMKSEAPDKPIDNVVLSRMKQFRAMNKLKKLALKVIAEGLSEEEIKGLKTMFENMDMDKSGSITYEELKMGLNRHGSKLSETEVKQLMEAADVDGNGTIDYIEFISATMHRHRLERDEHLYKAFQYFDKDGSGHITKEEVEIAMKEHGMGDEANAKDLISEFDKNNDGKIDYEEFCTMMRNGILQPQGKLVGIHI.

Residue Gly2 is the site of N-myristoyl glycine attachment. A Protein kinase domain is found at 36–305 (YSFGDELGKG…AADVLEHPWM (270 aa)). Residues 42–50 (LGKGNFGTT) and Lys65 contribute to the ATP site. The active-site Proton acceptor is Asp164. Ser204 bears the Phosphoserine mark. Residues 309 to 339 (APDKPIDNVVLSRMKQFRAMNKLKKLALKVI) are autoinhibitory domain. EF-hand domains lie at 346 to 381 (EEIK…HGSK), 382 to 417 (LSET…RHRL), 418 to 453 (ERDE…HGMG), and 454 to 488 (DEAN…GILQ). 20 residues coordinate Ca(2+): Asp359, Asp361, Ser363, Ser365, Glu370, Asp395, Asp397, Asn399, Thr401, Glu406, Asp431, Asp433, Ser435, His437, Glu442, Asp466, Asn468, Asp470, Lys472, and Glu477.

The protein belongs to the protein kinase superfamily. Ser/Thr protein kinase family. CDPK subfamily.

The protein resides in the membrane. It catalyses the reaction L-seryl-[protein] + ATP = O-phospho-L-seryl-[protein] + ADP + H(+). It carries out the reaction L-threonyl-[protein] + ATP = O-phospho-L-threonyl-[protein] + ADP + H(+). Its activity is regulated as follows. Activated by calcium. Autophosphorylation may play an important role in the regulation of the kinase activity. Its function is as follows. May play a role in signal transduction pathways that involve calcium as a second messenger. This Arabidopsis thaliana (Mouse-ear cress) protein is Calcium-dependent protein kinase 22 (CPK22).